We begin with the raw amino-acid sequence, 187 residues long: Translation machinery-associated protein 22 (187 aa).

Residues 94–165 enclose the SUI1 domain; sequence VTIKRIERNK…EIEEFILEKY (72 aa).

The protein belongs to the DENR family. As to quaternary structure, interacts with the 40S ribosomal subunit.

The protein resides in the cytoplasm. The sequence is that of Translation machinery-associated protein 22 (tma-22) from Neurospora crassa (strain ATCC 24698 / 74-OR23-1A / CBS 708.71 / DSM 1257 / FGSC 987).